The primary structure comprises 180 residues: ATP-dependent protease subunit HslV (180 aa).

Residue Thr5 is part of the active site. Na(+) contacts are provided by Gly165, Cys168, and Thr171.

The protein belongs to the peptidase T1B family. HslV subfamily. As to quaternary structure, a double ring-shaped homohexamer of HslV is capped on each side by a ring-shaped HslU homohexamer. The assembly of the HslU/HslV complex is dependent on binding of ATP.

It localises to the cytoplasm. It carries out the reaction ATP-dependent cleavage of peptide bonds with broad specificity.. With respect to regulation, allosterically activated by HslU binding. Protease subunit of a proteasome-like degradation complex believed to be a general protein degrading machinery. In Helicobacter acinonychis (strain Sheeba), this protein is ATP-dependent protease subunit HslV.